The sequence spans 97 residues: Aspartyl/glutamyl-tRNA(Asn/Gln) amidotransferase subunit C (97 aa).

A disordered region spans residues 58 to 78; that stretch reads LPQGRLRKDTPRDPLDRENAL. Basic and acidic residues predominate over residues 63–77; it reads LRKDTPRDPLDRENA.

Belongs to the GatC family. As to quaternary structure, heterotrimer of A, B and C subunits.

It carries out the reaction L-glutamyl-tRNA(Gln) + L-glutamine + ATP + H2O = L-glutaminyl-tRNA(Gln) + L-glutamate + ADP + phosphate + H(+). The enzyme catalyses L-aspartyl-tRNA(Asn) + L-glutamine + ATP + H2O = L-asparaginyl-tRNA(Asn) + L-glutamate + ADP + phosphate + 2 H(+). Functionally, allows the formation of correctly charged Asn-tRNA(Asn) or Gln-tRNA(Gln) through the transamidation of misacylated Asp-tRNA(Asn) or Glu-tRNA(Gln) in organisms which lack either or both of asparaginyl-tRNA or glutaminyl-tRNA synthetases. The reaction takes place in the presence of glutamine and ATP through an activated phospho-Asp-tRNA(Asn) or phospho-Glu-tRNA(Gln). The chain is Aspartyl/glutamyl-tRNA(Asn/Gln) amidotransferase subunit C from Saccharolobus islandicus (strain Y.N.15.51 / Yellowstone #2) (Sulfolobus islandicus).